The primary structure comprises 213 residues: GTP cyclohydrolase 1 (213 aa).

Positions 104, 107, and 175 each coordinate Zn(2+).

The protein belongs to the GTP cyclohydrolase I family. Toroid-shaped homodecamer, composed of two pentamers of five dimers.

It carries out the reaction GTP + H2O = 7,8-dihydroneopterin 3'-triphosphate + formate + H(+). It functions in the pathway cofactor biosynthesis; 7,8-dihydroneopterin triphosphate biosynthesis; 7,8-dihydroneopterin triphosphate from GTP: step 1/1. The sequence is that of GTP cyclohydrolase 1 from Brucella anthropi (strain ATCC 49188 / DSM 6882 / CCUG 24695 / JCM 21032 / LMG 3331 / NBRC 15819 / NCTC 12168 / Alc 37) (Ochrobactrum anthropi).